We begin with the raw amino-acid sequence, 245 residues long: RNA polymerase sigma factor SigI5 (245 aa).

The short motif at 60-73 (DEYSIGLMAFNEAI) is the Polymerase core binding element. Positions 202-221 (MKELSKIIDVHPKTVERNRA) form a DNA-binding region, H-T-H motif.

This sequence belongs to the sigma-70 factor family. SigI subfamily. In terms of assembly, interacts with RsgI5.

The protein resides in the cytoplasm. Negatively regulated by the anti-sigma-I factor RsgI5. Binding of the polysaccharide substrate to RsgI5 may lead to the release and activation of SigI5. Sigma factors are initiation factors that promote the attachment of RNA polymerase to specific initiation sites and are then released. This sigma factor is involved in regulation of cellulosomal genes via an external polysaccharide-sensing mechanism. This is RNA polymerase sigma factor SigI5 from Acetivibrio thermocellus (strain ATCC 27405 / DSM 1237 / JCM 9322 / NBRC 103400 / NCIMB 10682 / NRRL B-4536 / VPI 7372) (Clostridium thermocellum).